Consider the following 174-residue polypeptide: MSGNRDSILPPLEWLSAQHPPAPAAVSDWLMEPGSMTRRFERHCGRVHVEPQRECFVTRDQLGEEAEHLPDSPRYWLREVVLLGDNQPWLLGRTVIPLETLTGPDLALVDLGTLPLGRYLFSSDELTRDYIHIGRQDALWARRSRLRLAGKPLLLTELFLPASPLYATGSSVPE.

4 residues coordinate substrate: methionine 36, arginine 78, leucine 116, and glutamate 157.

It belongs to the UbiC family. Monomer.

The protein localises to the cytoplasm. It carries out the reaction chorismate = 4-hydroxybenzoate + pyruvate. It participates in cofactor biosynthesis; ubiquinone biosynthesis. Removes the pyruvyl group from chorismate, with concomitant aromatization of the ring, to provide 4-hydroxybenzoate (4HB) for the ubiquinone pathway. The sequence is that of Chorismate pyruvate-lyase from Serratia proteamaculans (strain 568).